A 274-amino-acid polypeptide reads, in one-letter code: HTH-type transcriptional regulator GadX (274 aa).

Residues 145–242 form the HTH araC/xylS-type domain; sequence TRVCTVINNN…GMTPTEYQER (98 aa). 2 DNA-binding regions (H-T-H motif) span residues 162 to 183 and 209 to 232; these read ARIA…REEG and IKRV…RNYY.

In terms of assembly, homodimer.

In terms of biological role, positively regulates the expression of about fifteen genes involved in acid resistance such as gadA, gadB and gadC. Depending on the conditions (growth phase and medium), can repress gadW. Negatively regulates perA expression in acidic conditions and positively regulates it in alkaline conditions. The polypeptide is HTH-type transcriptional regulator GadX (gadX) (Escherichia coli O127:H6 (strain E2348/69 / EPEC)).